Here is a 77-residue protein sequence, read N- to C-terminus: Putative defensin-like protein 129 (77 aa).

Positions 1 to 25 (MTKNTALTIFMVVLVIEMVMEETQG) are cleaved as a signal peptide. Disulfide bonds link C28–C77, C37–C59, C42–C71, and C46–C73.

It belongs to the DEFL family.

The protein localises to the secreted. The polypeptide is Putative defensin-like protein 129 (LCR13) (Arabidopsis thaliana (Mouse-ear cress)).